A 120-amino-acid polypeptide reads, in one-letter code: Ribosome-binding factor A (120 aa).

It belongs to the RbfA family. In terms of assembly, monomer. Binds 30S ribosomal subunits, but not 50S ribosomal subunits or 70S ribosomes.

Its subcellular location is the cytoplasm. One of several proteins that assist in the late maturation steps of the functional core of the 30S ribosomal subunit. Associates with free 30S ribosomal subunits (but not with 30S subunits that are part of 70S ribosomes or polysomes). Required for efficient processing of 16S rRNA. May interact with the 5'-terminal helix region of 16S rRNA. This is Ribosome-binding factor A from Clostridium botulinum (strain ATCC 19397 / Type A).